A 267-amino-acid chain; its full sequence is MRKTWPLLTLLLCTCASAQLRADIAHNTPPGQATMQVYDGEKVLFQATTPGLNAVTASKFSPDGRWLLNIADGSGYVQLWDTAKGERVKTFLSVYFRIFGADFTPDSERLLLDFSGSKERADPRRPAYFPSPSLWNLATLERISFVYNDKRESFYNGKVTFSQDGERMAFVRPNAYSSGPASVWNAKTGAYIATISRLPYPKGAAQTGGAGAMDARLSPDGQRVLVRYVDNRLAEYDASTGTLLKVRGKFSAADAGAELERFAREGR.

The WD repeat unit spans residues 50–90; that stretch reads PGLNAVTASKFSPDGRWLLNIADGSGYVQLWDTAKGERVKT.

This is an uncharacterized protein from Deinococcus radiodurans (strain ATCC 13939 / DSM 20539 / JCM 16871 / CCUG 27074 / LMG 4051 / NBRC 15346 / NCIMB 9279 / VKM B-1422 / R1).